Here is a 413-residue protein sequence, read N- to C-terminus: Multifunctional CCA protein (413 aa).

ATP-binding residues include G8 and R11. G8 and R11 together coordinate CTP. Residues D21 and D23 each contribute to the Mg(2+) site. Residues R91, R137, and R140 each coordinate ATP. Positions 91, 137, and 140 each coordinate CTP. In terms of domain architecture, HD spans 228–329; the sequence is TGKHTLLSLK…VSLFDKGDFW (102 aa).

Belongs to the tRNA nucleotidyltransferase/poly(A) polymerase family. Bacterial CCA-adding enzyme type 1 subfamily. As to quaternary structure, monomer. Can also form homodimers and oligomers. Requires Mg(2+) as cofactor. Ni(2+) is required as a cofactor.

The catalysed reaction is a tRNA precursor + 2 CTP + ATP = a tRNA with a 3' CCA end + 3 diphosphate. It catalyses the reaction a tRNA with a 3' CCA end + 2 CTP + ATP = a tRNA with a 3' CCACCA end + 3 diphosphate. Its function is as follows. Catalyzes the addition and repair of the essential 3'-terminal CCA sequence in tRNAs without using a nucleic acid template. Adds these three nucleotides in the order of C, C, and A to the tRNA nucleotide-73, using CTP and ATP as substrates and producing inorganic pyrophosphate. tRNA 3'-terminal CCA addition is required both for tRNA processing and repair. Also involved in tRNA surveillance by mediating tandem CCA addition to generate a CCACCA at the 3' terminus of unstable tRNAs. While stable tRNAs receive only 3'-terminal CCA, unstable tRNAs are marked with CCACCA and rapidly degraded. The polypeptide is Multifunctional CCA protein (Shewanella denitrificans (strain OS217 / ATCC BAA-1090 / DSM 15013)).